Reading from the N-terminus, the 970-residue chain is Sodium/calcium exchanger 1 (970 aa).

Positions Met-1–Ala-32 are cleaved as a signal peptide. Residues Asp-33–Lys-71 are Extracellular-facing. Asn-41 carries N-linked (GlcNAc...) asparagine glycosylation. A helical transmembrane segment spans residues Ile-72–Ile-92. Topologically, residues Ala-93–Asn-133 are cytoplasmic. A helical membrane pass occupies residues Leu-134–Cys-154. Residues Ala-138 to Ile-178 form an Alpha-1 repeat. Residues Gly-155–Thr-167 lie on the Extracellular side of the membrane. The N-linked (GlcNAc...) asparagine glycan is linked to Asn-157. The chain crosses the membrane as a helical span at residues Ile-168 to Pro-188. The Cytoplasmic segment spans residues Asp-189–Phe-201. Residues Phe-202–Ser-222 traverse the membrane as a helical segment. The Extracellular portion of the chain corresponds to Ser-223–Glu-228. Residues Val-229–Ala-249 form a helical membrane-spanning segment. Residues Asp-250–Gly-797 are Cytoplasmic-facing. Positions Arg-251–Gly-270 are putative calmodulin-binding region. 2 positions are modified to phosphoserine: Ser-282 and Ser-389. 2 Calx-beta domains span residues Val-393–Ser-493 and Ala-524–Gly-624. The Ca(2+) site is built by Glu-417, Asp-453, Asp-478, Asp-479, Ile-481, Glu-483, Glu-486, Asp-530, Asp-531, Asp-532, Glu-548, Asp-584, Asp-610, Glu-611, Glu-612, and Glu-715. Residues Trp-798–Leu-818 form a helical membrane-spanning segment. Residues Ala-819–His-821 are Extracellular-facing. A helical membrane pass occupies residues Phe-822 to Thr-842. The stretch at Ala-839–Val-875 is one Alpha-2 repeat. The Cytoplasmic portion of the chain corresponds to Ser-843–Asn-871. A helical transmembrane segment spans residues Ala-872–Ala-892. Over Asn-893 to Thr-903 the chain is Extracellular. Residues Leu-904–Tyr-924 traverse the membrane as a helical segment. At Arg-925–Lys-941 the chain is on the cytoplasmic side. A helical transmembrane segment spans residues Leu-942 to Glu-962. Over Ala-963 to Phe-970 the chain is Extracellular.

The protein belongs to the Ca(2+):cation antiporter (CaCA) (TC 2.A.19) family. SLC8 subfamily. Detected in heart, kidney and brain (at protein level).

Its subcellular location is the cell membrane. It carries out the reaction Ca(2+)(in) + 3 Na(+)(out) = Ca(2+)(out) + 3 Na(+)(in). With respect to regulation, activated by micromolar levels of Ca(2+). Functionally, mediates the exchange of one Ca(2+) ion against three to four Na(+) ions across the cell membrane, and thereby contributes to the regulation of cytoplasmic Ca(2+) levels and Ca(2+)-dependent cellular processes. Contributes to Ca(2+) transport during excitation-contraction coupling in muscle. In a first phase, voltage-gated channels mediate the rapid increase of cytoplasmic Ca(2+) levels due to release of Ca(2+) stores from the endoplasmic reticulum. SLC8A1 mediates the export of Ca(2+) from the cell during the next phase, so that cytoplasmic Ca(2+) levels rapidly return to baseline. Required for normal embryonic heart development and the onset of heart contractions. This is Sodium/calcium exchanger 1 (Slc8a1) from Mus musculus (Mouse).